A 590-amino-acid chain; its full sequence is Probable serine/threonine-protein phosphatase PP2A regulatory subunit (590 aa).

HEAT repeat units lie at residues 37-73 (LSTI…VLAE), 74-111 (QLGN…DKAV), 113-150 (SLRK…TSAC), 151-188 (GLFS…RAAA), 189-227 (AKLG…LLTV), 228-266 (ESAI…YMVA), 267-305 (EKLI…CAAT), 306-344 (QRLQ…QLVK), 349-387 (GVIM…LNII), 388-426 (SSLD…LAIV), 427-465 (QFMP…EAST), 466-504 (LIMK…MTCL), 505-543 (FCLN…FNAA), and 544-582 (KSLK…YFSE).

It belongs to the phosphatase 2A regulatory subunit A family. In terms of assembly, part of a complex consisting of a common heterodimeric core enzyme, composed of catalytic subunit let-92 and constant regulatory subunit paa-1, that associates with a variety of regulatory subunits which confer distinct properties to the holoenzyme. Interacts with rsa-1.

The protein resides in the cytoplasm. It localises to the cytoskeleton. It is found in the microtubule organizing center. Its subcellular location is the centrosome. The protein localises to the spindle. In terms of biological role, acts as a scaffolding protein for phosphatase let-92 and its regulatory subunits. Probably together with let-92 and regulatory subunit sur-6, regulates centriole duplication, microtubule outgrowth and mitotic spindle stability during early embryonic cell division by preventing the degradation of sas-5 and kinase zyg-1. During vulva development, may play a role with phosphatase let-92 and regulatory subunit sur-6 in the induction of vulva cell precursors by positively regulating let-60/Ras-MAP kinase signaling, probably by promoting lin-45 activation. Plays a positive role in axon guidance probably by inhibiting phosphatase let-92. The chain is Probable serine/threonine-protein phosphatase PP2A regulatory subunit (paa-1) from Caenorhabditis elegans.